Consider the following 243-residue polypeptide: Putative ABC transporter arginine-binding protein 2 (243 aa).

A signal peptide spans 1–19; that stretch reads MKKVLIAALIAGFSLSATA.

It belongs to the bacterial solute-binding protein 3 family. In terms of assembly, the complex is composed of two ATP-binding proteins (ArtP), two transmembrane proteins (ArtM and ArtQ) and two solute-binding proteins (ArtJ and ArtI).

It localises to the periplasm. Functionally, part of the ABC transporter complex ArtPIQMJ involved in arginine transport. The sequence is that of Putative ABC transporter arginine-binding protein 2 (artI) from Escherichia coli (strain K12).